A 705-amino-acid chain; its full sequence is Elongation factor G 2 (705 aa).

The tr-type G domain maps to 8–290; it reads ELYRNIGISA…AVLDYLPSPL (283 aa). Residues 17-24, 88-92, and 142-145 contribute to the GTP site; these read AHIDAGKT, DTPGH, and NKMD.

This sequence belongs to the TRAFAC class translation factor GTPase superfamily. Classic translation factor GTPase family. EF-G/EF-2 subfamily.

The protein localises to the cytoplasm. In terms of biological role, catalyzes the GTP-dependent ribosomal translocation step during translation elongation. During this step, the ribosome changes from the pre-translocational (PRE) to the post-translocational (POST) state as the newly formed A-site-bound peptidyl-tRNA and P-site-bound deacylated tRNA move to the P and E sites, respectively. Catalyzes the coordinated movement of the two tRNA molecules, the mRNA and conformational changes in the ribosome. The sequence is that of Elongation factor G 2 from Bordetella avium (strain 197N).